The following is a 249-amino-acid chain: Hydroxyacylglutathione hydrolase (249 aa).

Zn(2+) contacts are provided by histidine 54, histidine 56, aspartate 58, histidine 59, histidine 113, aspartate 138, and histidine 176.

Belongs to the metallo-beta-lactamase superfamily. Glyoxalase II family. Monomer. It depends on Zn(2+) as a cofactor.

The enzyme catalyses an S-(2-hydroxyacyl)glutathione + H2O = a 2-hydroxy carboxylate + glutathione + H(+). It participates in secondary metabolite metabolism; methylglyoxal degradation; (R)-lactate from methylglyoxal: step 2/2. Thiolesterase that catalyzes the hydrolysis of S-D-lactoyl-glutathione to form glutathione and D-lactic acid. The protein is Hydroxyacylglutathione hydrolase of Parasynechococcus marenigrum (strain WH8102).